The primary structure comprises 255 residues: NADPH-dependent FMN reductase ArsH (255 aa).

Position 43-50 (43-50) interacts with FMN; it reads SLRARSFS.

The protein belongs to the ArsH family. Homotetramer. It depends on FMN as a cofactor.

In terms of biological role, has NADPH-dependent FMN reductase activity and very low azoreductase activity. No activity with NADH. The chain is NADPH-dependent FMN reductase ArsH from Shigella flexneri.